We begin with the raw amino-acid sequence, 955 residues long: UvrABC system protein A (955 aa).

35–42 (GLSGSGKS) is an ATP binding site. ABC transporter domains follow at residues 322–601 (WGST…EESI) and 621–951 (GHDN…RYLK). 654–661 (GVSGSGKS) is a binding site for ATP. A C4-type zinc finger spans residues 754–780 (CEACQGDGLIKIEMHFLPDVYVKCDIC).

Belongs to the ABC transporter superfamily. UvrA family. In terms of assembly, forms a heterotetramer with UvrB during the search for lesions.

The protein localises to the cytoplasm. In terms of biological role, the UvrABC repair system catalyzes the recognition and processing of DNA lesions. UvrA is an ATPase and a DNA-binding protein. A damage recognition complex composed of 2 UvrA and 2 UvrB subunits scans DNA for abnormalities. When the presence of a lesion has been verified by UvrB, the UvrA molecules dissociate. In Rickettsia conorii (strain ATCC VR-613 / Malish 7), this protein is UvrABC system protein A.